Here is a 244-residue protein sequence, read N- to C-terminus: Phosphoadenosine 5'-phosphosulfate reductase (244 aa).

The active-site Nucleophile; cysteine thiosulfonate intermediate is Cys-239.

It belongs to the PAPS reductase family. CysH subfamily.

It is found in the cytoplasm. The catalysed reaction is [thioredoxin]-disulfide + sulfite + adenosine 3',5'-bisphosphate + 2 H(+) = [thioredoxin]-dithiol + 3'-phosphoadenylyl sulfate. It functions in the pathway sulfur metabolism; hydrogen sulfide biosynthesis; sulfite from sulfate: step 3/3. Its function is as follows. Catalyzes the formation of sulfite from phosphoadenosine 5'-phosphosulfate (PAPS) using thioredoxin as an electron donor. This chain is Phosphoadenosine 5'-phosphosulfate reductase, found in Yersinia pseudotuberculosis serotype O:1b (strain IP 31758).